The following is a 42-amino-acid chain: Crotamine-IV-3 (42 aa).

3 disulfide bridges follow: cysteine 4/cysteine 37, cysteine 11/cysteine 31, and cysteine 19/cysteine 38.

The protein belongs to the crotamine-myotoxin family. In terms of assembly, monomer. In terms of tissue distribution, expressed by the venom gland.

The protein resides in the secreted. In terms of biological role, cationic peptide that possesses multiple functions. It acts as a cell-penetrating peptide (CPP), and as a potent voltage-gated potassium channel (Kv) inhibitor. It exhibits antimicrobial activities, and hind limb paralysis. It also induces potent blockade of neuromuscular transmission in young chicken biventer cervicis preparation and potent myotoxic effect. In mice, it induces myonecrosis, upon intramuscular or subcutaneous injections. The chain is Crotamine-IV-3 from Crotalus durissus cumanensis (South American rattlesnake).